Here is a 59-residue protein sequence, read N- to C-terminus: Conotoxin ViVA (59 aa).

Residues 1 to 19 form the signal peptide; the sequence is MRCVPVFIILLLLIPSASS. The propeptide occupies 20-46; that stretch reads AAVQPKTEKDDVPLASVHDSALRILSR. Position 47 is a pyrrolidone carboxylic acid (Gln47). Intrachain disulfides connect Cys48–Cys55 and Cys49–Cys56. Ile58 bears the Isoleucine amide mark.

Belongs to the conotoxin T superfamily. As to expression, expressed by the venom duct.

Its subcellular location is the secreted. The protein is Conotoxin ViVA of Conus virgo (Virgin cone).